A 766-amino-acid polypeptide reads, in one-letter code: Isocitrate lyase 2 (766 aa).

Residue 106 to 108 (GGW) participates in substrate binding. Mg(2+) is bound at residue aspartate 177. Cysteine 215 serves as the catalytic Proton acceptor. Substrate-binding positions include 216 to 217 (GH), arginine 252, 487 to 491 (NLSPS), and threonine 522.

It belongs to the isocitrate lyase/PEP mutase superfamily. Isocitrate lyase family. Mg(2+) serves as cofactor.

It carries out the reaction D-threo-isocitrate = glyoxylate + succinate. It participates in carbohydrate metabolism; glyoxylate cycle; (S)-malate from isocitrate: step 1/2. Its function is as follows. Involved in the persistence and virulence of Mycobacterium. Catalyzes the reversible formation of succinate and glyoxylate from isocitrate, a key step of the glyoxylate cycle, which operates as an anaplerotic route for replenishing the tricarboxylic acid cycle during growth on fatty acid substrates. The chain is Isocitrate lyase 2 (aceA) from Mycobacterium bovis (strain ATCC BAA-935 / AF2122/97).